The primary structure comprises 20 residues: Unknown protein NF028 from 2D-PAGE (20 aa).

In Naegleria fowleri (Brain eating amoeba), this protein is Unknown protein NF028 from 2D-PAGE.